The following is a 345-amino-acid chain: D-fructose 1,6-bisphosphatase class 2/sedoheptulose 1,7-bisphosphatase (345 aa).

Residues Asp33, Glu57, Asp97, and Glu100 each coordinate Mn(2+). Residues 100–102 (EGT), Tyr131, 176–178 (RPR), and 198–200 (DGD) contribute to the substrate site. Glu225 contacts Mn(2+).

The protein belongs to the FBPase class 2 family. Homotetramer. Mn(2+) serves as cofactor.

The catalysed reaction is beta-D-fructose 1,6-bisphosphate + H2O = beta-D-fructose 6-phosphate + phosphate. It catalyses the reaction D-sedoheptulose 1,7-bisphosphate + H2O = D-sedoheptulose 7-phosphate + phosphate. It participates in carbohydrate biosynthesis; Calvin cycle. Its function is as follows. Catalyzes the hydrolysis of fructose 1,6-bisphosphate (Fru 1,6-P2) and sedoheptulose 1,7-bisphosphate (Sed 1,7-P2) to fructose 6-phosphate and sedoheptulose 7-phosphate, respectively. The protein is D-fructose 1,6-bisphosphatase class 2/sedoheptulose 1,7-bisphosphatase of Trichodesmium erythraeum (strain IMS101).